Here is a 506-residue protein sequence, read N- to C-terminus: RNA-splicing ligase RtcB homolog (506 aa).

Residues Asp120, Cys123, His228, His260, and His354 each coordinate Mn(2+). 227 to 231 is a binding site for GMP; sequence NHYAE. Residues 354-355, 403-406, Ser410, 429-432, and Lys505 each bind GMP; these read HN, GGTM, and HGAG. The active-site GMP-histidine intermediate is the His429.

This sequence belongs to the RtcB family. Catalytic component of the tRNA-splicing ligase complex. It depends on Mn(2+) as a cofactor.

It catalyses the reaction a 3'-end 3'-phospho-ribonucleotide-RNA + a 5'-end dephospho-ribonucleoside-RNA + GTP = a ribonucleotidyl-ribonucleotide-RNA + GMP + diphosphate. The enzyme catalyses a 3'-end 2',3'-cyclophospho-ribonucleotide-RNA + a 5'-end dephospho-ribonucleoside-RNA + GTP + H2O = a ribonucleotidyl-ribonucleotide-RNA + GMP + diphosphate + H(+). Catalytic subunit of the tRNA-splicing ligase complex that acts by directly joining spliced tRNA halves to mature-sized tRNAs by incorporating the precursor-derived splice junction phosphate into the mature tRNA as a canonical 3',5'-phosphodiester. May act as an RNA ligase with broad substrate specificity, and may function toward other RNAs. In Plasmodium falciparum (isolate 3D7), this protein is RNA-splicing ligase RtcB homolog.